The following is a 445-amino-acid chain: Phosphoglucosamine mutase (445 aa).

The active-site Phosphoserine intermediate is S102. Mg(2+)-binding residues include S102, D241, D243, and D245. Position 102 is a phosphoserine (S102).

The protein belongs to the phosphohexose mutase family. Mg(2+) is required as a cofactor. Activated by phosphorylation.

It catalyses the reaction alpha-D-glucosamine 1-phosphate = D-glucosamine 6-phosphate. Its function is as follows. Catalyzes the conversion of glucosamine-6-phosphate to glucosamine-1-phosphate. This is Phosphoglucosamine mutase from Acinetobacter baumannii (strain ACICU).